A 497-amino-acid chain; its full sequence is Taxane 10-beta-hydroxylase (497 aa).

Cys-443 lines the heme pocket.

The protein belongs to the cytochrome P450 family. Heme is required as a cofactor.

It catalyses the reaction taxa-4(20),11-dien-5alpha-yl acetate + reduced [NADPH--hemoprotein reductase] + O2 = 10beta-hydroxytaxa-4(20),11-dien-5alpha-yl acetate + oxidized [NADPH--hemoprotein reductase] + H2O + H(+). The protein operates within alkaloid biosynthesis; taxol biosynthesis; 10-deacetyl-2-debenzoylbaccatin III from taxa-4(20),11-dien-5alpha-ol: step 2/3. Functionally, involved in the transformation of a taxadienyl acetate by hydroxylation at C10 to yield taxadien-5-alpha-acetoxy-10-beta-ol. The polypeptide is Taxane 10-beta-hydroxylase (CYP725A1) (Taxus cuspidata (Japanese yew)).